Reading from the N-terminus, the 186-residue chain is Imidazoleglycerol-phosphate dehydratase (186 aa).

Belongs to the imidazoleglycerol-phosphate dehydratase family.

It is found in the cytoplasm. It catalyses the reaction D-erythro-1-(imidazol-4-yl)glycerol 3-phosphate = 3-(imidazol-4-yl)-2-oxopropyl phosphate + H2O. Its pathway is amino-acid biosynthesis; L-histidine biosynthesis; L-histidine from 5-phospho-alpha-D-ribose 1-diphosphate: step 6/9. This Pyrobaculum aerophilum (strain ATCC 51768 / DSM 7523 / JCM 9630 / CIP 104966 / NBRC 100827 / IM2) protein is Imidazoleglycerol-phosphate dehydratase.